The chain runs to 202 residues: Small ribosomal subunit protein uS4 (202 aa).

The S4 RNA-binding domain occupies Arg93–Val156.

This sequence belongs to the universal ribosomal protein uS4 family. As to quaternary structure, part of the 30S ribosomal subunit. Contacts protein S5. The interaction surface between S4 and S5 is involved in control of translational fidelity.

Its function is as follows. One of the primary rRNA binding proteins, it binds directly to 16S rRNA where it nucleates assembly of the body of the 30S subunit. Functionally, with S5 and S12 plays an important role in translational accuracy. This chain is Small ribosomal subunit protein uS4, found in Pediococcus pentosaceus (strain ATCC 25745 / CCUG 21536 / LMG 10740 / 183-1w).